We begin with the raw amino-acid sequence, 3420 residues long: Adhesin BmaC autotransporter (3420 aa).

A signal peptide spans 1–72 (MPNLANQDFT…SLVMAGTAAA (72 aa)). The region spanning 3138–3420 (GPSGNNGIWA…AGSVGLRVRW (283 aa)) is the Autotransporter domain.

It localises to the cell surface. It is found in the cell outer membrane. Fibronectin-binding protein, which is involved in adhesion to host cells and in the infective process. Mediates the binding of B.suis to the extracellular matrix and to non-phagocytic cells via cell-associated fibronectin. The polypeptide is Adhesin BmaC autotransporter (Brucella suis biovar 1 (strain 1330)).